The sequence spans 255 residues: F-box/SPRY domain-containing protein 1 (255 aa).

The 49-residue stretch at 3–51 (DRVAALCNYNVLEVVFSYLDLNDLGRCSQVCKSWFHFLNDENSDVWRFH) folds into the F-box domain. The region spanning 61–253 (TKSELLSPVP…VSMVYCGTPL (193 aa)) is the B30.2/SPRY domain.

The protein belongs to the FBXO45/Fsn family. In terms of assembly, component of an E3 ubiquitin ligase complex composed of hiw and Fsn.

It is found in the synapse. Its pathway is protein modification; protein ubiquitination. Required in the presynaptic motoneuron to down-regulate the levels of wnd and restrain synaptic terminal growth at the neuromuscular junction (NMJ). In Drosophila persimilis (Fruit fly), this protein is F-box/SPRY domain-containing protein 1.